Reading from the N-terminus, the 337-residue chain is Mitochondrial uncoupling protein 6 (337 aa).

Solcar repeat units lie at residues 4-136 (KPFL…LKRR), 145-236 (FPLV…VKEI), and 246-331 (GGIG…VRGL). 6 consecutive transmembrane segments (helical) span residues 6-26 (FLEG…LDLI), 105-125 (PAAL…YSAT), 151-171 (ITAG…ADVA), 210-230 (RGSW…LATY), 252-272 (VAAS…IDVV), and 304-324 (YKGL…LFLT).

This sequence belongs to the mitochondrial carrier (TC 2.A.29) family.

Its subcellular location is the mitochondrion inner membrane. Its function is as follows. PUMPS are mitochondrial transporter proteins that create proton leaks across the inner mitochondrial membrane, thus uncoupling oxidative phosphorylation. This leads to a decrease in the efficiency of oxidative phosphorylation and an increase in heat production. May be involved in protecting plant cells against oxidative stress damage. Recombinant PUMP6, reconstituted into liposomes, transports a wide range of dicarboxylic acids including malate, oxaloacetate and succinate as well as phosphate, sulfate and thiosulfate. However, it is unknown if these transports are of any biological significance in vivo. This Arabidopsis thaliana (Mouse-ear cress) protein is Mitochondrial uncoupling protein 6 (PUMP6).